The sequence spans 362 residues: Probable RNA methyltransferase Tbd_1951 (362 aa).

The Proton acceptor role is filled by E89. The Radical SAM core domain occupies 92-318 (LLPRDGVCVS…AKLRHSAGQD (227 aa)). The cysteines at positions 99 and 323 are disulfide-linked. Residues C106, C110, and C113 each coordinate [4Fe-4S] cluster. Residues 151-152 (GE), S181, 204-206 (SLH), and N280 each bind S-adenosyl-L-methionine. The S-methylcysteine intermediate role is filled by C323. Positions 342–362 (LPSAETPAASPKAAASIGFPG) are disordered. Residues 343–362 (PSAETPAASPKAAASIGFPG) show a composition bias toward low complexity.

It belongs to the radical SAM superfamily. RlmN family. [4Fe-4S] cluster is required as a cofactor.

The protein localises to the cytoplasm. This Thiobacillus denitrificans (strain ATCC 25259 / T1) protein is Probable RNA methyltransferase Tbd_1951.